Consider the following 112-residue polypeptide: uncharacterized protein (112 aa).

The chain crosses the membrane as a helical span at residues 75 to 95; that stretch reads ILGVFGGFIYILTPLPIVSGF.

The protein resides in the membrane. This is an uncharacterized protein from Methanocaldococcus jannaschii (strain ATCC 43067 / DSM 2661 / JAL-1 / JCM 10045 / NBRC 100440) (Methanococcus jannaschii).